The primary structure comprises 309 residues: Pyridoxal 5'-phosphate synthase subunit PDX1.1 (309 aa).

Met-1 is modified (N-acetylmethionine). Asp-41 is a binding site for D-ribose 5-phosphate. Catalysis depends on Lys-98, which acts as the Schiff-base intermediate with D-ribose 5-phosphate. Residue Gly-170 participates in D-ribose 5-phosphate binding. Arg-182 contributes to the D-glyceraldehyde 3-phosphate binding site. Residues Gly-231 and 252 to 253 (GS) each bind D-ribose 5-phosphate.

It belongs to the PdxS/SNZ family. As to quaternary structure, homodimer or heterodimer with PDX1.2 or PDX1.3. Interacts with PDX2. As to expression, expressed in flowers, shoots, leaves and weakly in roots.

It localises to the cytoplasm. It carries out the reaction aldehydo-D-ribose 5-phosphate + D-glyceraldehyde 3-phosphate + L-glutamine = pyridoxal 5'-phosphate + L-glutamate + phosphate + 3 H2O + H(+). The protein operates within cofactor biosynthesis; pyridoxal 5'-phosphate biosynthesis. Its function is as follows. Catalyzes the formation of pyridoxal 5'-phosphate from ribose 5-phosphate (RBP), glyceraldehyde 3-phosphate (G3P) and ammonia. The ammonia is provided by PDX2. Can also use ribulose 5-phosphate and dihydroxyacetone phosphate as substrates, resulting from enzyme-catalyzed isomerization of RBP and G3P, respectively. Also plays an indirect role in resistance to singlet oxygen-generating photosensitizers. This Arabidopsis thaliana (Mouse-ear cress) protein is Pyridoxal 5'-phosphate synthase subunit PDX1.1 (PDX11).